A 637-amino-acid chain; its full sequence is MVKLMIRRLSSQVSKFVQPRLLETGTLRIALINCPNELSFCCERGFSAFSDRNLSYRERLRSGLVDIKADDAIDLFRDMIHSRPLPTVIDFSRLFSAIAKTKQYDLVLALCKQMELKGIAHNLYTLSIMINCFCRCRKLCLAFSAMGKIIKLGYEPNTITFSTLINGLCLEGRVSEALELVDRMVEMGHKPDLITINTLVNGLCLSGKEAEAMLLIDKMVEYGCQPNAVTYGPVLNVMCKSGQTALAMELLRKMEERNIKLDAVKYSIIIDGLCKHGSLDNAFNLFNEMEMKGITTNIITYNILIGGFCNAGRWDDGAKLLRDMIKRKINPNVVTFSVLIDSFVKEGKLREAEELHKEMIHRGIAPDTITYTSLIDGFCKENHLDKANQMVDLMVSKGCDPNIRTFNILINGYCKANRIDDGLELFRKMSLRGVVADTVTYNTLIQGFCELGKLNVAKELFQEMVSRKVPPNIVTYKILLDGLCDNGESEKALEIFEKIEKSKMELDIGIYNIIIHGMCNASKVDDAWDLFCSLPLKGVKPGVKTYNIMIGGLCKKGPLSEAELLFRKMEEDGHAPDGWTYNILIRAHLGDGDATKSVKLIEELKRCGFSVDASTIKMVIDMLSDGRLKKSFLDMLS.

The N-terminal 95 residues, 1-95 (MVKLMIRRLS…PTVIDFSRLF (95 aa)), are a transit peptide targeting the mitochondrion. 15 PPR repeats span residues 87–121 (TVID…GIAH), 122–156 (NLYT…GYEP), 157–191 (NTIT…GHKP), 192–226 (DLIT…GCQP), 227–261 (NAVT…NIKL), 262–296 (DAVK…GITT), 297–331 (NIIT…KINP), 332–366 (NVVT…GIAP), 367–401 (DTIT…GCDP), 402–436 (NIRT…GVVA), 437–471 (DTVT…KVPP), 472–506 (NIVT…KMEL), 507–541 (DIGI…GVKP), 542–576 (GVKT…GHAP), and 577–611 (DGWT…GFSV).

The protein belongs to the PPR family. P subfamily.

Its subcellular location is the mitochondrion. This is Pentatricopeptide repeat-containing protein At1g12300, mitochondrial from Arabidopsis thaliana (Mouse-ear cress).